Here is a 277-residue protein sequence, read N- to C-terminus: Diaminopimelate epimerase (277 aa).

Substrate contacts are provided by Asn13, Gln46, and Asn66. The Proton donor role is filled by Cys75. Substrate is bound by residues 76–77 (GN), Asn160, Asn193, and 211–212 (ER). The active-site Proton acceptor is the Cys220. 221-222 (GS) lines the substrate pocket.

This sequence belongs to the diaminopimelate epimerase family. Homodimer.

It localises to the cytoplasm. The catalysed reaction is (2S,6S)-2,6-diaminopimelate = meso-2,6-diaminopimelate. Its pathway is amino-acid biosynthesis; L-lysine biosynthesis via DAP pathway; DL-2,6-diaminopimelate from LL-2,6-diaminopimelate: step 1/1. In terms of biological role, catalyzes the stereoinversion of LL-2,6-diaminopimelate (L,L-DAP) to meso-diaminopimelate (meso-DAP), a precursor of L-lysine and an essential component of the bacterial peptidoglycan. The protein is Diaminopimelate epimerase of Legionella pneumophila (strain Lens).